Here is a 139-residue protein sequence, read N- to C-terminus: 3-hydroxyacyl-[acyl-carrier-protein] dehydratase FabZ (139 aa).

H46 is a catalytic residue.

It belongs to the thioester dehydratase family. FabZ subfamily.

The protein localises to the cytoplasm. It carries out the reaction a (3R)-hydroxyacyl-[ACP] = a (2E)-enoyl-[ACP] + H2O. Involved in unsaturated fatty acids biosynthesis. Catalyzes the dehydration of short chain beta-hydroxyacyl-ACPs and long chain saturated and unsaturated beta-hydroxyacyl-ACPs. This is 3-hydroxyacyl-[acyl-carrier-protein] dehydratase FabZ from Petrotoga mobilis (strain DSM 10674 / SJ95).